Reading from the N-terminus, the 165-residue chain is Phosphopantetheine adenylyltransferase (165 aa).

Threonine 9 contacts substrate. ATP-binding positions include threonine 9–phenylalanine 10 and histidine 17. Residues lysine 41, leucine 73, and arginine 87 each coordinate substrate. Residues glycine 88 to arginine 90, glutamate 98, and tyrosine 123 to threonine 129 contribute to the ATP site.

It belongs to the bacterial CoaD family. Homohexamer. It depends on Mg(2+) as a cofactor.

It localises to the cytoplasm. It carries out the reaction (R)-4'-phosphopantetheine + ATP + H(+) = 3'-dephospho-CoA + diphosphate. Its pathway is cofactor biosynthesis; coenzyme A biosynthesis; CoA from (R)-pantothenate: step 4/5. In terms of biological role, reversibly transfers an adenylyl group from ATP to 4'-phosphopantetheine, yielding dephospho-CoA (dPCoA) and pyrophosphate. In Polynucleobacter necessarius subsp. necessarius (strain STIR1), this protein is Phosphopantetheine adenylyltransferase.